The primary structure comprises 174 residues: Ribosome maturation factor RimM (174 aa).

A PRC barrel domain is found at 95-174 (DDEFYWRDLI…QIQVEWPSDF (80 aa)).

The protein belongs to the RimM family. In terms of assembly, binds ribosomal protein uS19.

It is found in the cytoplasm. In terms of biological role, an accessory protein needed during the final step in the assembly of 30S ribosomal subunit, possibly for assembly of the head region. Essential for efficient processing of 16S rRNA. May be needed both before and after RbfA during the maturation of 16S rRNA. It has affinity for free ribosomal 30S subunits but not for 70S ribosomes. In Idiomarina loihiensis (strain ATCC BAA-735 / DSM 15497 / L2-TR), this protein is Ribosome maturation factor RimM.